The primary structure comprises 238 residues: Probable transcriptional regulatory protein YeeN (238 aa).

This sequence belongs to the TACO1 family. YeeN subfamily.

The protein localises to the cytoplasm. The sequence is that of Probable transcriptional regulatory protein YeeN from Salmonella typhimurium (strain LT2 / SGSC1412 / ATCC 700720).